A 226-amino-acid polypeptide reads, in one-letter code: Lipoprotein-releasing system ATP-binding protein LolD (226 aa).

Residues 6–226 form the ABC transporter domain; the sequence is LKLDNIRRAF…KMSEGLLVEV (221 aa). Residue 42-49 participates in ATP binding; it reads GPSGAGKS.

The protein belongs to the ABC transporter superfamily. Lipoprotein translocase (TC 3.A.1.125) family. The complex is composed of two ATP-binding proteins (LolD) and two transmembrane proteins (LolC and LolE).

Its subcellular location is the cell inner membrane. In terms of biological role, part of the ABC transporter complex LolCDE involved in the translocation of mature outer membrane-directed lipoproteins, from the inner membrane to the periplasmic chaperone, LolA. Responsible for the formation of the LolA-lipoprotein complex in an ATP-dependent manner. This Paramagnetospirillum magneticum (strain ATCC 700264 / AMB-1) (Magnetospirillum magneticum) protein is Lipoprotein-releasing system ATP-binding protein LolD.